We begin with the raw amino-acid sequence, 443 residues long: D(2) dopamine receptor (443 aa).

Residues 1-37 (MDPLNLSWYDDDLESQNWSRPFNGSEGKPGKPHYNYY) lie on the Extracellular side of the membrane. Residues Asn5, Asn17, and Asn23 are each glycosylated (N-linked (GlcNAc...) asparagine). The chain crosses the membrane as a helical span at residues 38 to 60 (AMLLTLLIFIIVFGNVLVCMAVS). Residues 61–70 (REKALQTTTN) lie on the Cytoplasmic side of the membrane. The helical transmembrane segment at 71 to 93 (YLIVSLAVADLLVATLVMPWVVY) threads the bilayer. Residues 94 to 108 (LEVVGEWKFSRIHCD) lie on the Extracellular side of the membrane. Cys107 and Cys182 are oxidised to a cystine. Residues 109-130 (IFVTLDVMMCTASILNLCAISI) traverse the membrane as a helical segment. Over 131–151 (DRYTAVAMPMLYNTRYSSKRR) the chain is Cytoplasmic. The helical transmembrane segment at 152–172 (VTVMIAIVWVLSFTISCPLLF) threads the bilayer. Topologically, residues 173–188 (GLNNTDQNECIIANPA) are extracellular. The chain crosses the membrane as a helical span at residues 189–213 (FVVYSSIVSFYVPFIVTLLVYIKIY). Positions 211 to 373 (KIYIVLRRRR…SQQKEKKATQ (163 aa)) are interaction with PPP1R9B. The Cytoplasmic portion of the chain corresponds to 214-373 (IVLRRRRKRV…SQQKEKKATQ (160 aa)). The segment at 282-332 (EMLSSTSPPERTRYSPIPPSHHQLTLPDPSHHGLHSTADSPAKPEKNGHAK) is disordered. The span at 323–332 (AKPEKNGHAK) shows a compositional bias: basic and acidic residues. The chain crosses the membrane as a helical span at residues 374–395 (MLAIVLGVFIICWLPFFITHIL). Residues 396-409 (NIHCECNIPPVLYS) are Extracellular-facing. Residues Cys399 and Cys401 are joined by a disulfide bond. The chain crosses the membrane as a helical span at residues 410 to 431 (AFTWLGYVNSAVNPIIYTTFNI). Residues 432–443 (EFRKAFLKILHC) are Cytoplasmic-facing. Cys443 carries the S-palmitoyl cysteine lipid modification.

It belongs to the G-protein coupled receptor 1 family. In terms of assembly, forms homo- and heterooligomers with DRD4. The interaction with DRD4 may modulate agonist-induced downstream signaling. Interacts with CADPS and CADPS2. Interacts with GPRASP1, PPP1R9B and CLIC6. Interacts with ARRB2. Interacts with HTR2A. Interacts with DRD1. Interacts with KCNA2. Palmitoylated. Palmitoylation which is required for proper localization to the plasma membrane and stability of the receptor could be carried on by ZDHHC4, ZDHHC3 and ZDHHC8.

Its subcellular location is the cell membrane. It localises to the golgi apparatus membrane. Dopamine receptor whose activity is mediated by G proteins which inhibit adenylyl cyclase. Positively regulates postnatal regression of retinal hyaloid vessels via suppression of VEGFR2/KDR activity, downstream of OPN5. This chain is D(2) dopamine receptor (DRD2), found in Canis lupus familiaris (Dog).